The primary structure comprises 748 residues: 5-methyltetrahydropteroyltriglutamate--homocysteine methyltransferase (748 aa).

Lysine 111 lines the 5-methyltetrahydropteroyltri-L-glutamate pocket. Residues 428–430 and glutamate 478 each bind L-homocysteine; that span reads IGS. L-methionine-binding positions include 428-430 and glutamate 478; that span reads IGS. Residues 509 to 510 and tryptophan 555 each bind 5-methyltetrahydropteroyltri-L-glutamate; that span reads RC. Aspartate 593 contributes to the L-homocysteine binding site. Aspartate 593 lines the L-methionine pocket. Glutamate 599 contacts 5-methyltetrahydropteroyltri-L-glutamate. Positions 635, 637, and 659 each coordinate Zn(2+). Histidine 687 serves as the catalytic Proton donor. Residue cysteine 719 coordinates Zn(2+).

This sequence belongs to the vitamin-B12 independent methionine synthase family. Zn(2+) is required as a cofactor.

It catalyses the reaction 5-methyltetrahydropteroyltri-L-glutamate + L-homocysteine = tetrahydropteroyltri-L-glutamate + L-methionine. It functions in the pathway amino-acid biosynthesis; L-methionine biosynthesis via de novo pathway; L-methionine from L-homocysteine (MetE route): step 1/1. In terms of biological role, catalyzes the transfer of a methyl group from 5-methyltetrahydrofolate to homocysteine resulting in methionine formation. This is 5-methyltetrahydropteroyltriglutamate--homocysteine methyltransferase from Herpetosiphon aurantiacus (strain ATCC 23779 / DSM 785 / 114-95).